The following is a 214-amino-acid chain: A-type ATP synthase subunit D (214 aa).

It belongs to the V-ATPase D subunit family. Has multiple subunits with at least A(3), B(3), C, D, E, F, H, I and proteolipid K(x).

The protein localises to the cell membrane. Functionally, component of the A-type ATP synthase that produces ATP from ADP in the presence of a proton gradient across the membrane. This is A-type ATP synthase subunit D from Desulfurococcus sp. (strain SY).